Here is a 159-residue protein sequence, read N- to C-terminus: Nucleotide-binding protein PST_3153 (159 aa).

It belongs to the YajQ family.

Its function is as follows. Nucleotide-binding protein. In Stutzerimonas stutzeri (strain A1501) (Pseudomonas stutzeri), this protein is Nucleotide-binding protein PST_3153.